We begin with the raw amino-acid sequence, 325 residues long: Intelectin-2 (325 aa).

Residues 1–26 (MLSMLRTMTRLCFLLFFSVATSGCSA) form the signal peptide. The Fibrinogen C-terminal domain maps to 44–267 (FSFSSLPRSC…AANALCAGIK (224 aa)). An intrachain disulfide couples Cys-53 to Cys-82. 7 residues coordinate Ca(2+): His-98, Glu-99, Asp-101, Gly-104, Gly-109, Asp-110, and Asp-145. Intrachain disulfides connect Cys-106–Cys-292, Cys-211–Cys-271, and Cys-263–Cys-277. Ca(2+) is bound by residues Asn-272, Glu-274, and Asp-294. 274-275 (EH) contacts a carbohydrate.

In terms of tissue distribution, expressed only in the small intestine.

The protein resides in the secreted. May play a role in the defense system against pathogens. The sequence is that of Intelectin-2 (ITLN2) from Homo sapiens (Human).